An 854-amino-acid chain; its full sequence is Transcription factor asR3 (854 aa).

The segment at residues 19–45 (CWECRRRKIKCDRNDPCAHCIRHETQC) is a DNA-binding region (zn(2)-C6 fungal-type). The segment at 56-156 (TDSDVSRTRP…SLSTNTSPSA (101 aa)) is disordered. Polar residues-rich tracts occupy residues 78–90 (ASGS…TRPS) and 125–145 (LNPS…SSRG). A compositionally biased stretch (low complexity) spans 146–156 (PSLSTNTSPSA).

It localises to the nucleus. Functionally, transcription factor; part of the gene cluster that mediates the biosynthesis of xenovulene A, an unusual meroterpenoid that has potent inhibitory effects on the human gamma-aminobutyrate A (GABAA) benzodiazepine receptor. This is Transcription factor asR3 from Sarocladium schorii (Acremonium strictum (strain IMI 501407)).